The chain runs to 440 residues: Probable exopolygalacturonase C (440 aa).

A signal peptide spans 1–21 (MLITNPALLGILASLAPLALG). Residues N24, N84, N151, and N219 are each glycosylated (N-linked (GlcNAc...) asparagine). PbH1 repeat units lie at residues 217–238 (GTNI…AVNT) and 240–261 (SHNI…SIGS). The active-site Proton donor is the D231. H255 is a catalytic residue. Residue N271 is glycosylated (N-linked (GlcNAc...) asparagine). Residues 272–293 (ITNLRFEDVTVIDALYAARFKS) form a PbH1 3 repeat. Residues N313 and N350 are each glycosylated (N-linked (GlcNAc...) asparagine). The cysteines at positions 389 and 395 are disulfide-linked. N-linked (GlcNAc...) asparagine glycosylation is present at N434.

This sequence belongs to the glycosyl hydrolase 28 family.

Its subcellular location is the secreted. It catalyses the reaction [(1-&gt;4)-alpha-D-galacturonosyl](n) + H2O = alpha-D-galacturonate + [(1-&gt;4)-alpha-D-galacturonosyl](n-1). Functionally, specific in hydrolyzing the terminal glycosidic bond of polygalacturonic acid and oligogalacturonates. The polypeptide is Probable exopolygalacturonase C (pgxC) (Neosartorya fischeri (strain ATCC 1020 / DSM 3700 / CBS 544.65 / FGSC A1164 / JCM 1740 / NRRL 181 / WB 181) (Aspergillus fischerianus)).